Here is a 6885-residue protein sequence, read N- to C-terminus: Nesprin-2 (6885 aa).

The interval 1 to 286 is actin-binding; sequence MASSPELPTE…YVAQFLQYSK (286 aa). Over 1 to 6834 the chain is Cytoplasmic; that stretch reads MASSPELPTE…QRSFLSRVVR (6834 aa). 2 Calponin-homology (CH) domains span residues 31–136 and 181–286; these read DTQK…LHFH and MSAR…QYSK. Spectrin repeat units lie at residues 297–378, 379–472, 473–575, 576–680, 735–838, 839–932, and 933–1034; these read GKVK…HQIN, AWKI…RINN, ILEK…KNIY, NVKS…KQDQ, VAKD…KNLT, DVSP…LHHE, and LSLY…KCAS. A coiled-coil region spans residues 297-6782; that stretch reads GKVKDAMGWL…PASPLPSFDE (6486 aa). Ser-841 bears the Phosphoserine mark. Lys-955 is modified (N6-acetyllysine). Polar residues predominate over residues 1042-1059; it reads PTAGGTSKNEGTITTSEN. The interval 1042 to 1084 is disordered; it reads PTAGGTSKNEGTITTSENRGGDPHSEAPFAKSDNQPSTEKAME. Spectrin repeat units follow at residues 1121–1212, 1263–1323, 1324–1419, 1420–1524, 1525–1636, 1637–1738, 1739–1830, 1831–1938, 1939–2036, 2037–2132, 2133–2243, and 2244–2360; these read TYRD…TLNT, NIQD…DTLK, ALED…YGVQ, EEFT…ALVT, ECLE…KTED, YYEN…TGES, NCHA…TKKS, VLQD…AKEL, EDSL…EEED, KLLP…LAST, YLSH…SVQN, and LDGH…LNSI. Positions 2368–2382 are enriched in basic and acidic residues; sequence EKKGKFTLPGREKQA. Residues 2368–2394 form a disordered region; sequence EKKGKFTLPGREKQATSDVQESTQESA. Positions 2383–2393 are enriched in polar residues; that stretch reads TSDVQESTQES. 16 Spectrin repeats span residues 2432 to 2513, 2514 to 2620, 2621 to 2717, 2718 to 2831, 2832 to 2933, 2934 to 3036, 3037 to 3142, 3143 to 3248, 3249 to 3352, 3353 to 3465, 3466 to 3573, 3574 to 3679, 3680 to 3777, 3778 to 3880, 3881 to 3986, and 3987 to 4086; these read DERK…TLKK, NKES…KYSQ, QVVE…ETLE, PLHL…QLEF, KLEE…FIQN, TCNE…EKIK, QLDT…NMVL, ELSP…DLRT, NVLN…AQET, EAER…MWCE, ELKQ…KVQK, NKEL…SNEV, LKSS…ECRT, SQLN…KIME, SLPQ…VTQE, and QNEL…LPAV. Ser-2781 carries the phosphoserine modification. Composition is skewed to basic and acidic residues over residues 4073-4083 and 4093-4102; these read QEQEGVERDRL and VAERDASERK. Disordered regions lie at residues 4073-4162, 4184-4232, 4335-4363, and 4416-4448; these read QEQE…SGTI, DSLN…KTRP, EKHS…PVNL, and HDND…QGQN. Residue Ser-4108 is modified to Phosphoserine. Basic and acidic residues-rich tracts occupy residues 4122–4134 and 4144–4155; these read SSVK…EKAE and WKHDKDMEEDRA. The stretch at 4229–4348 is one Spectrin 36 repeat; it reads KTRPEPTEVL…EDQHPTILKK (120 aa). Positions 4335-4356 are enriched in basic and acidic residues; it reads EKHSEDQHPTILKKSSEPEHQE. The segment covering 4421 to 4434 has biased composition (polar residues); the sequence is TQESSASNQASSPE. Spectrin repeat units lie at residues 4520 to 4639, 4640 to 4727, 4728 to 4837, 4838 to 4943, 4944 to 5051, 5052 to 5164, 5165 to 5266, 5267 to 5391, 5392 to 5487, 5488 to 5589, 5590 to 5704, 5705 to 5799, 5800 to 5907, 5908 to 6017, 6018 to 6135, 6136 to 6243, and 6244 to 6355; these read NMTE…RSYQ, NEIK…RARY, TELS…QSLL, QKWE…QALL, KHLL…QEKL, HQLQ…KIQH, LEQL…TQVN, QLKT…KAYS, NAHG…MLLV, KANE…CSEL, QGIG…QWQD, FTTS…PQLA, EMIK…RVAI, RKQE…VKKL, KETF…EETW, RLWQ…LRHF, and TNQR…PGLE. Ser-5785 is subject to Phosphoserine. Residues 6354–6367 are compositionally biased toward acidic residues; it reads LEDEKEASENETDM. The tract at residues 6354–6508 is disordered; sequence LEDEKEASEN…GTDGGKEGPR (155 aa). Phosphoserine occurs at positions 6361, 6384, 6411, 6428, 6429, 6430, and 6459. Positions 6368–6384 are enriched in basic and acidic residues; sequence EDPREIQTDSWRKRGES. Spectrin repeat units lie at residues 6461-6549, 6550-6665, and 6666-6782; these read SCPE…KLKI, KQNL…QCQD, and FHQL…SFDE. Positions 6463 to 6474 are enriched in basic and acidic residues; that stretch reads PEHHYKQMEGDR. The span at 6477–6489 shows a compositional bias: pro residues; the sequence is PPVPPASSTPYKP. A compositionally biased stretch (low complexity) spans 6490–6499; the sequence is PYGKLLLPPG. A disordered region spans residues 6769-6824; it reads GTQNPASPLPSFDEVDSGDQPPATSVPAPRAKQFRAVRTTEGEEETESRVPGSTRP. Residues 6826–6885 enclose the KASH domain; it reads RSFLSRVVRAALPLQLLLLLLLLLACLLPSSEEDYSCTQANNFARSFYPMLRYTNGPPPT. Residues 6835-6855 form a helical; Anchor for type IV membrane protein membrane-spanning segment; the sequence is AALPLQLLLLLLLLLACLLPS. Residues 6856–6885 lie on the Perinuclear space side of the membrane; sequence SEEDYSCTQANNFARSFYPMLRYTNGPPPT. The sufficient for interaction with SUN2 stretch occupies residues 6872-6885; that stretch reads FYPMLRYTNGPPPT.

This sequence belongs to the nesprin family. Core component of LINC complexes which are composed of inner nuclear membrane SUN domain-containing proteins coupled to outer nuclear membrane KASH domain-containing nesprins. SUN and KASH domain-containing proteins seem to bind each other promiscuously; however, some LINC complex constituents are tissue- or cell type-specific. At least SUN1/2-containing core LINC complexes are proposed to be hexameric composed of three protomers of each KASH and SUN domain-containing protein. The SUN2:SYNE2/KASH2 complex is a heterohexamer; the homotrimeric cloverleave-like conformation of the SUN domain is a prerequisite for LINC complex formation in which three separate SYNE2/KASH2 peptides bind at the interface of adjacent SUN domains. Interacts with EMD, LMNA, MKS3 and F-actin via its N-terminal domain. Interacts with DCTN1 and DYNC1I1/2; suggesting the association with the dynein-dynactin motor complex. Associates with kinesin motor complexes. Interacts with TMEM67. Interacts (via KASH domain) with TMEM258. Interacts with BROX; this interaction promotes SYN2 ubiquitination and facilitates the relaxation of mechanical stress imposed by compressive actin fibers at the rupture site. Post-translationally, the disulfid bond with SUN2 is required for stability of the SUN2:SYNE2/KASH2 LINC complex under tensile forces though not required for the interaction. In terms of processing, ubiquitinated, targeting it for degradation. In terms of tissue distribution, widely expressed, with higher level in kidney, adult and fetal liver, stomach and placenta. Weakly expressed in skeletal muscle and brain. Isoform 5 is highly expressed in pancreas, skeletal muscle and heart.

Its subcellular location is the nucleus outer membrane. It is found in the sarcoplasmic reticulum membrane. The protein resides in the cell membrane. It localises to the cytoplasm. The protein localises to the cytoskeleton. Its subcellular location is the mitochondrion. It is found in the nucleus. The protein resides in the nucleoplasm. It localises to the myofibril. The protein localises to the sarcomere. Its subcellular location is the z line. It is found in the cell junction. The protein resides in the focal adhesion. Multi-isomeric modular protein which forms a linking network between organelles and the actin cytoskeleton to maintain the subcellular spatial organization. As a component of the LINC (LInker of Nucleoskeleton and Cytoskeleton) complex involved in the connection between the nuclear lamina and the cytoskeleton. The nucleocytoplasmic interactions established by the LINC complex play an important role in the transmission of mechanical forces across the nuclear envelope and in nuclear movement and positioning. Specifically, SYNE2 and SUN2 assemble in arrays of transmembrane actin-associated nuclear (TAN) lines which are bound to F-actin cables and couple the nucleus to retrograde actin flow during actin-dependent nuclear movement. May be involved in nucleus-centrosome attachment. During interkinetic nuclear migration (INM) at G2 phase and nuclear migration in neural progenitors its LINC complex association with SUN1/2 and probable association with cytoplasmic dynein-dynactin motor complexes functions to pull the nucleus toward the centrosome; SYNE1 and SYNE2 may act redundantly. During INM at G1 phase mediates respective LINC complex association with kinesin to push the nucleus away from the centrosome. Involved in nuclear migration in retinal photoreceptor progenitors. Required for centrosome migration to the apical cell surface during early ciliogenesis. Facilitates the relaxation of mechanical stress imposed by compressive actin fibers at the rupture site through its nteraction with SYN2. In Homo sapiens (Human), this protein is Nesprin-2.